The chain runs to 307 residues: Ribonuclease Z (307 aa).

Residues histidine 63, histidine 65, aspartate 67, histidine 68, histidine 143, aspartate 213, and histidine 271 each contribute to the Zn(2+) site. Aspartate 67 functions as the Proton acceptor in the catalytic mechanism.

It belongs to the RNase Z family. In terms of assembly, homodimer. Zn(2+) serves as cofactor.

The catalysed reaction is Endonucleolytic cleavage of RNA, removing extra 3' nucleotides from tRNA precursor, generating 3' termini of tRNAs. A 3'-hydroxy group is left at the tRNA terminus and a 5'-phosphoryl group is left at the trailer molecule.. In terms of biological role, zinc phosphodiesterase, which displays some tRNA 3'-processing endonuclease activity. Probably involved in tRNA maturation, by removing a 3'-trailer from precursor tRNA. The protein is Ribonuclease Z of Lactococcus lactis subsp. cremoris (strain MG1363).